We begin with the raw amino-acid sequence, 157 residues long: Small ribosomal subunit protein uS7 (157 aa).

Belongs to the universal ribosomal protein uS7 family. In terms of assembly, part of the 30S ribosomal subunit. Contacts proteins S9 and S11.

In terms of biological role, one of the primary rRNA binding proteins, it binds directly to 16S rRNA where it nucleates assembly of the head domain of the 30S subunit. Is located at the subunit interface close to the decoding center, probably blocks exit of the E-site tRNA. In Francisella tularensis subsp. tularensis (strain FSC 198), this protein is Small ribosomal subunit protein uS7.